Consider the following 388-residue polypeptide: Pepsin A-5 (388 aa).

Positions 1–15 (MKWLLLLGLVALSEC) are cleaved as a signal peptide. Residues 16-62 (IMYKVPLIRKKSLRRTLSERGLLKDFLKKHNLNPARKYFPQWEAPTL) constitute a propeptide, activation peptide. Residues 76–385 (YFGTIGIGTP…DRANNQVGLA (310 aa)) form the Peptidase A1 domain. Residue aspartate 94 is part of the active site. A disulfide bond links cysteine 107 and cysteine 112. Residue serine 130 is modified to Phosphoserine. The cysteines at positions 268 and 272 are disulfide-linked. The active site involves aspartate 277. Cysteine 311 and cysteine 344 are joined by a disulfide.

The protein belongs to the peptidase A1 family.

It is found in the secreted. It catalyses the reaction Preferential cleavage: hydrophobic, preferably aromatic, residues in P1 and P1' positions. Cleaves 1-Phe-|-Val-2, 4-Gln-|-His-5, 13-Glu-|-Ala-14, 14-Ala-|-Leu-15, 15-Leu-|-Tyr-16, 16-Tyr-|-Leu-17, 23-Gly-|-Phe-24, 24-Phe-|-Phe-25 and 25-Phe-|-Tyr-26 bonds in the B chain of insulin.. Its function is as follows. Shows particularly broad specificity; although bonds involving phenylalanine and leucine are preferred, many others are also cleaved to some extent. The chain is Pepsin A-5 (PGA5) from Homo sapiens (Human).